The primary structure comprises 173 residues: Photosystem I assembly protein Ycf3 (173 aa).

3 TPR repeats span residues 35–68 (AYVY…EDNP), 72–105 (GETL…NSNQ), and 120–153 (GRIA…NPGG).

The protein belongs to the Ycf3 family.

It is found in the cellular thylakoid membrane. Essential for the assembly of the photosystem I (PSI) complex. May act as a chaperone-like factor to guide the assembly of the PSI subunits. In Parasynechococcus marenigrum (strain WH8102), this protein is Photosystem I assembly protein Ycf3.